The primary structure comprises 87 residues: Neutrophil antibiotic peptide NP-3B (87 aa).

Positions 1-19 (MRTLILLTTLLLLALHTQA) are cleaved as a signal peptide. The propeptide occupies 20–58 (ESPQGSTKEAPDEEQDISVFFGGDKGTALQDAAVKAGVT). Cystine bridges form between cysteine 59–cysteine 87, cysteine 61–cysteine 76, and cysteine 66–cysteine 86.

The protein belongs to the alpha-defensin family.

The protein localises to the secreted. Active in vitro against S.aureus, fungi, Gram-positive and Gram-negative bacteria and to a lesser extent against an enveloped virus. This is Neutrophil antibiotic peptide NP-3B from Rattus norvegicus (Rat).